Consider the following 376-residue polypeptide: MCKPRVWRIAHTIVHVGALLLGTSQLTTCDFSGIFATIQQEVAIKSPSIPGAIYGLVKAGDKLYATNGRLWEKELNGIKWKPVPFLDGQDKRIDSLAASNTCVFACVSGDGVYKYTAGTTSSQKESNTDKAQAVVQMSDGKVVLQCALGDEKTTPSDADERLLGGGQGYLVTSKGFYTLPGSASCEVISETKDVTCKAEAPILASACDGSNTYILTKDKVYCRYTNGSGSTPTTWCDVEHKVSEPLALAVFKNKGETFLLVGGQQGYGEIKIATASGSSSSSSCVPLTAENVHATTGWGANCSTPEGSAEQYRSTIGRWAVSGIYVIKKDTSGGRKKRSTSTDCERPDLYVAVGDASDTYTGLWKFDTATNTWNRE.

Residues 1 to 28 (MCKPRVWRIAHTIVHVGALLLGTSQLTT) form the signal peptide. The N-palmitoyl cysteine moiety is linked to residue Cys-29. Cys-29 is lipidated: S-diacylglycerol cysteine.

This sequence belongs to the TP013X lipoprotein family.

The protein localises to the cell membrane. This is an uncharacterized protein from Treponema pallidum (strain Nichols).